Consider the following 483-residue polypeptide: FAD-dependent oxidoreductase oblC (483 aa).

Positions 1-21 (MRSVTSLVSFSACLLASSVTA) are cleaved as a signal peptide. Residues N100, N137, N190, and N240 are each glycosylated (N-linked (GlcNAc...) asparagine).

Belongs to the beta-cyclopiazonate dehydrogenase family. The cofactor is FAD.

It participates in secondary metabolite biosynthesis; terpenoid biosynthesis. Functionally, FAD-dependent oxidoreductase; part of the gene cluster that mediates the biosynthesis of the sesterterpenes ophiobolins, fungal phytotoxins with potential anti-cancer activities. The first step of the pathway is performed by the sesterterpene synthase oblA that possesses both prenyl transferase and terpene cyclase activity, converting isopentenyl diphosphate and dimethylallyl diphosphate into geranylfarnesyl diphosphate (GFPP) and further converting GFPP into ophiobolin F, respectively. Other sesterterpenoids (C(25) terpenoids) are found as minor products of oblA. The cytochrome P450 monooxygenase oblB then catalyzes a four-step oxidative transformation of ophiobolin F to yield ophiobolin C. The FAD-dependent oxidoreductase oblC might be involved in a later oxidation step that produces ophiobolin A. This is FAD-dependent oxidoreductase oblC from Cochliobolus heterostrophus (strain C5 / ATCC 48332 / race O) (Southern corn leaf blight fungus).